A 344-amino-acid chain; its full sequence is Hydrophobic dipeptide epimerase (344 aa).

Residues T126 and K151–K153 each bind substrate. 3 residues coordinate Mg(2+): D184, E210, and D235. Substrate-binding positions include K257 and D307 to D309.

This sequence belongs to the mandelate racemase/muconate lactonizing enzyme family. It depends on Mg(2+) as a cofactor.

Its function is as follows. Dipeptide epimerase with a preference for hydrophobic substrates. Catalyzes the epimerization of L-Ala-L-Thr, L-Ala-L-Met, L-Ala-L-His, L-Ala-L-Phe, L-Ala-L-Tyr, L-Ala-L-Trp, L-Ile-L-Ala, L-Ile-L-Ser, L-Ile-L-Met, L-Ile-L-His, L-Ile-L-Phe, L-Ile-L-Tyr, L-Ile-L-Trp, L-Phe-L-Met, L-Phe-L-His, L-Phe-L-Phe, L-Phe-L-Tyr, L-Phe-L-Trp, L-Phe-L-Ser, L-Phe-L-Thr and L-Phe-L-Lys (in vitro). This is Hydrophobic dipeptide epimerase from Roseobacter litoralis (strain ATCC 49566 / DSM 6996 / JCM 21268 / NBRC 15278 / OCh 149).